Here is a 710-residue protein sequence, read N- to C-terminus: Protein phosphatase 1 regulatory subunit 37 (710 aa).

Positions 1–12 are enriched in pro residues; that stretch reads MEIPPQEAPPGP. The disordered stretch occupies residues 1–46; sequence MEIPPQEAPPGPGADADADAEAEEAPAEAGSSSGASPPTDGRLKAA. A compositionally biased stretch (acidic residues) spans 16–26; that stretch reads ADADAEAEEAP. Residues 27–38 show a composition bias toward low complexity; sequence AEAGSSSGASPP. A phosphoserine mark is found at Ser54 and Ser60. 5 LRR repeats span residues 224-244, 252-273, 281-301, 310-330, and 338-358; these read SLAV…MLLA, NLQE…AQLG, SLQI…AYIC, GLVT…AFLG, and SLET…RNLK. Residues 487-677 form a disordered region; it reads PLEESGDLPA…APPGLEAKGS (191 aa). The span at 512-531 shows a compositional bias: acidic residues; the sequence is SDSDSDSDREEQEEEEEDQS. Residues 543-565 are compositionally biased toward low complexity; that stretch reads SSSAPCPALLPSTDSLGPGDKSP. Ser581 bears the Phosphoserine mark. Residues 603–624 are compositionally biased toward pro residues; the sequence is PPVPPTSVSSPPPSPPSPPASP. Residues 637–649 are compositionally biased toward polar residues; that stretch reads SEAQPQTEPSQAG. Positions 656-676 are enriched in low complexity; it reads LKPEFALALAPEAPPGLEAKG.

It belongs to the PPP1R37 family. Interacts with PPP1CA.

In terms of biological role, inhibits phosphatase activity of protein phosphatase 1 (PP1) complexes. The sequence is that of Protein phosphatase 1 regulatory subunit 37 (Ppp1r37) from Rattus norvegicus (Rat).